We begin with the raw amino-acid sequence, 284 residues long: Spermidine synthase (284 aa).

Residues 6–241 form the PABS domain; it reads NGWFSEISEF…GSIGFILCSL (236 aa). Glutamine 37 is a binding site for S-adenosyl 3-(methylsulfanyl)propylamine. A putrescine-binding site is contributed by tyrosine 67. Residues glutamine 68, aspartate 92, glutamate 112, 143–144, and aspartate 161 each bind S-adenosyl 3-(methylsulfanyl)propylamine; that span reads DG. Aspartate 161 (proton acceptor) is an active-site residue. Putrescine contacts are provided by residues 161–164 and tyrosine 229; that span reads DSSD.

Belongs to the spermidine/spermine synthase family.

It carries out the reaction S-adenosyl 3-(methylsulfanyl)propylamine + putrescine = S-methyl-5'-thioadenosine + spermidine + H(+). It functions in the pathway amine and polyamine biosynthesis; spermidine biosynthesis; spermidine from putrescine: step 1/1. Its function is as follows. Catalyzes the production of spermidine from putrescine and decarboxylated S-adenosylmethionine (dcSAM). Has a strong preference for putrescine as substrate. This Dictyostelium discoideum (Social amoeba) protein is Spermidine synthase (spsA).